The sequence spans 144 residues: 3-hydroxyacyl-[acyl-carrier-protein] dehydratase FabZ (144 aa).

Residue histidine 51 is part of the active site.

It belongs to the thioester dehydratase family. FabZ subfamily.

The protein resides in the cytoplasm. The catalysed reaction is a (3R)-hydroxyacyl-[ACP] = a (2E)-enoyl-[ACP] + H2O. Involved in unsaturated fatty acids biosynthesis. Catalyzes the dehydration of short chain beta-hydroxyacyl-ACPs and long chain saturated and unsaturated beta-hydroxyacyl-ACPs. In Lactococcus lactis subsp. cremoris (strain SK11), this protein is 3-hydroxyacyl-[acyl-carrier-protein] dehydratase FabZ.